The following is a 410-amino-acid chain: uncharacterized protein (410 aa).

A run of 12 helical transmembrane segments spans residues I27–I47, S63–L83, L97–V117, L118–I138, N145–G165, I180–L200, V228–N248, L254–L274, N293–N313, F316–S332, Y355–F375, and Q378–F398.

Belongs to the major facilitator superfamily.

It localises to the cell membrane. This is an uncharacterized protein from Buchnera aphidicola subsp. Acyrthosiphon pisum (strain APS) (Acyrthosiphon pisum symbiotic bacterium).